Here is a 303-residue protein sequence, read N- to C-terminus: N-acetylmuramic acid 6-phosphate etherase (303 aa).

The region spanning 62 to 225 (IVAAFRQGGR…TTASMVLLGK (164 aa)) is the SIS domain. Catalysis depends on Glu90, which acts as the Proton donor. Residue Glu121 is part of the active site.

The protein belongs to the GCKR-like family. MurNAc-6-P etherase subfamily. Homodimer.

It catalyses the reaction N-acetyl-D-muramate 6-phosphate + H2O = N-acetyl-D-glucosamine 6-phosphate + (R)-lactate. It functions in the pathway amino-sugar metabolism; 1,6-anhydro-N-acetylmuramate degradation. The protein operates within amino-sugar metabolism; N-acetylmuramate degradation. Its pathway is cell wall biogenesis; peptidoglycan recycling. Specifically catalyzes the cleavage of the D-lactyl ether substituent of MurNAc 6-phosphate, producing GlcNAc 6-phosphate and D-lactate. Together with AnmK, is also required for the utilization of anhydro-N-acetylmuramic acid (anhMurNAc) either imported from the medium or derived from its own cell wall murein, and thus plays a role in cell wall recycling. The polypeptide is N-acetylmuramic acid 6-phosphate etherase (Histophilus somni (strain 129Pt) (Haemophilus somnus)).